Reading from the N-terminus, the 229-residue chain is Endonuclease NucS (229 aa).

This sequence belongs to the NucS endonuclease family.

Its subcellular location is the cytoplasm. Functionally, cleaves both 3' and 5' ssDNA extremities of branched DNA structures. In Corynebacterium diphtheriae (strain ATCC 700971 / NCTC 13129 / Biotype gravis), this protein is Endonuclease NucS.